The primary structure comprises 386 residues: S-adenosylmethionine synthase (386 aa).

Residue histidine 14 coordinates ATP. Position 16 (aspartate 16) interacts with Mg(2+). A K(+)-binding site is contributed by glutamate 42. Residues glutamate 55 and glutamine 98 each coordinate L-methionine. A flexible loop region spans residues 98-108; sequence QSGDISQGVDG. Residues 162 to 164, 230 to 231, aspartate 239, 245 to 246, alanine 262, and lysine 266 contribute to the ATP site; these read DSK, RF, and RK. Aspartate 239 contributes to the L-methionine binding site. Lysine 270 contributes to the L-methionine binding site.

It belongs to the AdoMet synthase family. Homotetramer; dimer of dimers. The cofactor is Mg(2+). Requires K(+) as cofactor.

Its subcellular location is the cytoplasm. The catalysed reaction is L-methionine + ATP + H2O = S-adenosyl-L-methionine + phosphate + diphosphate. Its pathway is amino-acid biosynthesis; S-adenosyl-L-methionine biosynthesis; S-adenosyl-L-methionine from L-methionine: step 1/1. Its function is as follows. Catalyzes the formation of S-adenosylmethionine (AdoMet) from methionine and ATP. The overall synthetic reaction is composed of two sequential steps, AdoMet formation and the subsequent tripolyphosphate hydrolysis which occurs prior to release of AdoMet from the enzyme. In Salinibacter ruber (strain DSM 13855 / M31), this protein is S-adenosylmethionine synthase.